Here is a 299-residue protein sequence, read N- to C-terminus: 33 kDa chaperonin (299 aa).

2 disulfide bridges follow: cysteine 240–cysteine 242 and cysteine 273–cysteine 276.

The protein belongs to the HSP33 family. Post-translationally, under oxidizing conditions two disulfide bonds are formed involving the reactive cysteines. Under reducing conditions zinc is bound to the reactive cysteines and the protein is inactive.

It localises to the cytoplasm. In terms of biological role, redox regulated molecular chaperone. Protects both thermally unfolding and oxidatively damaged proteins from irreversible aggregation. Plays an important role in the bacterial defense system toward oxidative stress. The polypeptide is 33 kDa chaperonin (Thermosynechococcus vestitus (strain NIES-2133 / IAM M-273 / BP-1)).